A 450-amino-acid polypeptide reads, in one-letter code: MDLSAAAALCLWLLSACRPRDGLEAAAVLRAAGAGPVRSPGGGGGGGGGGRTLAQAAGAAAVPAAAVPRARAARRAAGSGFRNGSVVPHHFMMSLYRSLAGRAPAGAAAVSASGHGRADTITGFTDQATQDESAAETGQSFLFDVSSLNDADEVVGAELRVLRRGSPESGPGSWTSPPLLLLSTCPGAARAPRLLYSRAAEPLVGQRWEAFDVADAMRRHRREPRPPRAFCLLLRAVAGPVPSPLALRRLGFGWPGGGGSAAEERAVLVVSSRTQRKESLFREIRAQARALGAALASEPLPDPGTGTASPRAVIGGRRRRRTALAGTRTAQGSGGGAGRGHGRRGRSRCSRKPLHVDFKELGWDDWIIAPLDYEAYHCEGLCDFPLRSHLEPTNHAIIQTLLNSMAPDAAPASCCVPARLSPISILYIDAANNVVYKQYEDMVVEACGCR.

An N-terminal signal peptide occupies residues 1–19; it reads MDLSAAAALCLWLLSACRP. A propeptide spanning residues 20–321 is cleaved from the precursor; sequence RDGLEAAAVL…AVIGGRRRRR (302 aa). N-linked (GlcNAc...) asparagine glycosylation is present at asparagine 83. Positions 296–349 are disordered; it reads ASEPLPDPGTGTASPRAVIGGRRRRRTALAGTRTAQGSGGGAGRGHGRRGRSRC. The segment covering 340–349 has biased composition (basic residues); sequence GHGRRGRSRC. Disulfide bonds link cysteine 349–cysteine 415, cysteine 378–cysteine 447, and cysteine 382–cysteine 449.

This sequence belongs to the TGF-beta family. Homodimer; disulfide-linked.

The protein resides in the secreted. Its function is as follows. May play an active role in the motor area of the primate neocortex. This is Growth/differentiation factor 7 (GDF7) from Homo sapiens (Human).